A 182-amino-acid chain; its full sequence is Biotin transporter BioY2 (182 aa).

The next 5 membrane-spanning stretches (helical) occupy residues 12–32 (IALGAAIIAVLSPLAIPIGIV), 54–74 (FFAILLYLLLGFIGIPVFTGG), 78–98 (IAVLFGPTGGFLLAFLVMGTL), 111–131 (IPAFIINIVGHLLMLVIGTLW), and 150–170 (PFVFVEIIKAILVTIFGLALI).

This sequence belongs to the BioY family. In terms of assembly, in E.coli forms a stable energy-coupling factor (ECF) transporter complex composed of 2 membrane-embedded substrate-binding protein (S component), 2 ATP-binding proteins (A and A' components) and 2 transmembrane proteins (T component), probably with a stoichiometry of 2:1:1:2. May be able to interact with more than 1 S component at a time.

The protein localises to the cell membrane. In terms of biological role, probably a biotin-binding protein that interacts with the energy-coupling factor (ECF) ABC-transporter complex. Unlike classic ABC transporters this ECF transporter provides the energy necessary to transport a number of different substrates. The substrates themselves are bound by transmembrane, not extracytoplasmic soluble proteins. The sequence is that of Biotin transporter BioY2 (bioY2) from Lactococcus lactis subsp. cremoris (strain MG1363).